Reading from the N-terminus, the 280-residue chain is Phosphate import ATP-binding protein PstB (280 aa).

The ABC transporter domain maps to 34–275 (IEVKNLNFFY…PARKETEDYI (242 aa)). 66 to 73 (GPSGCGKS) contributes to the ATP binding site.

Belongs to the ABC transporter superfamily. Phosphate importer (TC 3.A.1.7) family. As to quaternary structure, the complex is composed of two ATP-binding proteins (PstB), two transmembrane proteins (PstC and PstA) and a solute-binding protein (PstS).

The protein localises to the cell inner membrane. It catalyses the reaction phosphate(out) + ATP + H2O = ADP + 2 phosphate(in) + H(+). Its function is as follows. Part of the ABC transporter complex PstSACB involved in phosphate import. Responsible for energy coupling to the transport system. In Burkholderia mallei (strain ATCC 23344), this protein is Phosphate import ATP-binding protein PstB.